The following is a 413-amino-acid chain: Chloramphenicol resistance protein CraA (413 aa).

Transmembrane regions (helical) follow at residues 18–38, 55–75, 84–104, 110–130, 147–167, 170–190, 228–248, 260–280, 289–309, 312–332, 349–369, and 373–393; these read LMFPLALVLFEFAVYIGNDLI, WAPSSMSFYLLGGASVAWLLG, KKVLLSGVLFFALCCFLILLT, FLTLRFLQGIGLSVISAVGYA, LMANISLLAPLLGPVLGAFLI, VSWHWGFVAIALLALLSWVGL, ALPLVGMPLMLWIALSPIILV, LAQFPVFLGLIVGNIVLIKII, VLIGLPIMLTGTLILILGVVW, YLIPCLLIGMTLICFGEGISF, TVAAAVSMLLMTSFFAMIELV, and YTQFHLWAFVLSAFAFIALWF.

The protein belongs to the major facilitator superfamily.

It localises to the cell inner membrane. In terms of biological role, efflux pump that mediates resistance to chloramphenicol. The protein is Chloramphenicol resistance protein CraA of Acinetobacter baumannii (strain ATCC 19606 / DSM 30007 / JCM 6841 / CCUG 19606 / CIP 70.34 / NBRC 109757 / NCIMB 12457 / NCTC 12156 / 81).